The sequence spans 652 residues: MISSSSCMFFLVFAFFLISPVRSSDVEALLSLKSSIDPSNSIPWRGTDPCNWEGVKKCMKGRVSKLVLENLNLSGSLNGKSLNQLDQLRVLSFKGNSLSGSIPNLSGLVNLKSLYLNDNNFSGEFPESLTSLHRLKTVVLSRNRFSGKIPSSLLRLSRLYTFYVQDNLFSGSIPPLNQATLRFFNVSNNQLSGHIPPTQALNRFNESSFTDNIALCGDQIQNSCNDTTGITSTPSAKPAIPVAKTRSRTKLIGIISGSICGGILILLLTFLLICLLWRRKRSKSKREERRSKRVAESKEAKTAETEEGTSDQKNKRFSWEKESEEGSVGTLVFLGRDITVVRYTMDDLLKASAETLGRGTLGSTYKAVMESGFIITVKRLKDAGFPRMDEFKRHIEILGRLKHPNLVPLRAYFQAKEECLLVYDYFPNGSLFSLIHGSKVSGSGKPLHWTSCLKIAEDLAMGLVYIHQNPGLTHGNLKSSNVLLGPDFESCLTDYGLSDLHDPYSIEDTSAASLFYKAPECRDLRKASTQPADVYSFGVLLLELLTGRTSFKDLVHKYGSDISTWVRAVREEETEVSEELNASEEKLQALLTIATACVAVKPENRPAMREVLKMVKDARAEAALFSFNSSDHSPGRWSDTIQSLPREDHMSI.

The N-terminal stretch at 1-23 (MISSSSCMFFLVFAFFLISPVRS) is a signal peptide. At 24-256 (SDVEALLSLK…SRTKLIGIIS (233 aa)) the chain is on the extracellular side. LRR repeat units lie at residues 64–84 (SKLVLENLNLSGSLNGKSLNQ), 85–108 (LDQLRVLSFKGNSLSGSIPNLSGL), 109–132 (VNLKSLYLNDNNFSGEFPESLTSL), 134–156 (RLKTVVLSRNRFSGKIPSSLLRL), 158–178 (RLYTFYVQDNLFSGSIPPLNQ), and 179–203 (ATLRFFNVSNNQLSGHIPPTQALNR). N-linked (GlcNAc...) asparagine glycosylation is found at Asn72, Asn104, and Asn120. Asn185, Asn205, and Asn225 each carry an N-linked (GlcNAc...) asparagine glycan. The helical transmembrane segment at 257–277 (GSICGGILILLLTFLLICLLW) threads the bilayer. Topologically, residues 278 to 652 (RRKRSKSKRE…SLPREDHMSI (375 aa)) are cytoplasmic. The interval 286-321 (REERRSKRVAESKEAKTAETEEGTSDQKNKRFSWEK) is disordered. The Protein kinase domain maps to 350 to 624 (KASAETLGRG…VKDARAEAAL (275 aa)). Residue Ser352 is modified to Phosphoserine. Residues 356–364 (LGRGTLGST) and Lys378 each bind ATP. Phosphoserine occurs at positions 430 and 433. At Thr509 the chain carries Phosphothreonine. Residues 630 to 652 (SDHSPGRWSDTIQSLPREDHMSI) are disordered.

Belongs to the protein kinase superfamily. Ser/Thr protein kinase family.

It is found in the cell membrane. This chain is Inactive leucine-rich repeat receptor-like serine/threonine-protein kinase At1g60630, found in Arabidopsis thaliana (Mouse-ear cress).